The chain runs to 246 residues: UL16-binding protein 6 (246 aa).

An N-terminal signal peptide occupies residues 1 to 25 (MAAAAIPALLLCLPLLFLLFGWSRA). Residues 29-117 (DPHSLCYDIT…IQLENYTPKE (89 aa)) are MHC class I alpha-1 like. C50 and C66 are disulfide-bonded. N-linked (GlcNAc...) asparagine glycosylation is found at N68 and N82. The tract at residues 118 to 210 (PLTLQARMSC…MDSTLEPSAG (93 aa)) is MHC class I alpha-2 like. A disulfide bond links C127 and C190. The GPI-anchor amidated glycine moiety is linked to residue G218. The propeptide at 219–246 (TTQLRATATTLILCCLLIILPCFILPGI) is removed in mature form.

This sequence belongs to the MHC class I family. As to quaternary structure, interacts with KLRK1/NKG2D. (Microbial infection) In CMV-infected cells, interacts with the viral glycoprotein UL16; this interaction causes relocalization from the cell surface to the cytoplasm and prevents binding to and activation of KLRK1/NKG2D, providing CMV with an immune evasion mechanism. In terms of tissue distribution, widely expressed. Expressed in trachea. Constitutively expressed in peripheral blood mononuclear cells, including B-cells and natural killer cells, as well as CD4+ and CD8+ T-cells and monocytes. Tends to be up-regulated in various lymphoid malignancies, including chronic lymphocytic leukemia.

It localises to the cell membrane. Its subcellular location is the endoplasmic reticulum. Its function is as follows. Binds and activates the KLRK1/NKG2D receptor, mediating natural killer cell cytotoxicity. The protein is UL16-binding protein 6 (RAET1L) of Homo sapiens (Human).